The primary structure comprises 584 residues: tRNA-guanine(15) transglycosylase (584 aa).

Asp95 acts as the Nucleophile in catalysis. Residues Asp130 and Gly196 each contribute to the substrate site. Positions 279, 281, and 284 each coordinate Zn(2+). One can recognise a PUA domain in the interval 507–582 (RMRVVVSEEA…RAVKVRRGIS (76 aa)).

This sequence belongs to the archaeosine tRNA-ribosyltransferase family. Zn(2+) is required as a cofactor.

It catalyses the reaction guanosine(15) in tRNA + 7-cyano-7-deazaguanine = 7-cyano-7-carbaguanosine(15) in tRNA + guanine. Its pathway is tRNA modification; archaeosine-tRNA biosynthesis. In terms of biological role, exchanges the guanine residue with 7-cyano-7-deazaguanine (preQ0) at position 15 in the dihydrouridine loop (D-loop) of archaeal tRNAs. This Pyrococcus abyssi (strain GE5 / Orsay) protein is tRNA-guanine(15) transglycosylase.